The primary structure comprises 288 residues: tRNA pseudouridine synthase B (288 aa).

Asp-38 (nucleophile) is an active-site residue.

Belongs to the pseudouridine synthase TruB family. Type 1 subfamily.

It catalyses the reaction uridine(55) in tRNA = pseudouridine(55) in tRNA. Responsible for synthesis of pseudouridine from uracil-55 in the psi GC loop of transfer RNAs. In Carboxydothermus hydrogenoformans (strain ATCC BAA-161 / DSM 6008 / Z-2901), this protein is tRNA pseudouridine synthase B.